We begin with the raw amino-acid sequence, 284 residues long: UPF0294 protein VV2535 (284 aa).

Belongs to the UPF0294 family.

Its subcellular location is the cytoplasm. The chain is UPF0294 protein VV2535 from Vibrio vulnificus (strain YJ016).